The primary structure comprises 304 residues: Phosphatidylserine decarboxylase proenzyme (304 aa).

Active-site charge relay system; for autoendoproteolytic cleavage activity residues include D90, H147, and S253. S253 serves as the catalytic Schiff-base intermediate with substrate; via pyruvic acid; for decarboxylase activity. S253 is modified (pyruvic acid (Ser); by autocatalysis).

The protein belongs to the phosphatidylserine decarboxylase family. PSD-B subfamily. Prokaryotic type I sub-subfamily. In terms of assembly, heterodimer of a large membrane-associated beta subunit and a small pyruvoyl-containing alpha subunit. Pyruvate serves as cofactor. Is synthesized initially as an inactive proenzyme. Formation of the active enzyme involves a self-maturation process in which the active site pyruvoyl group is generated from an internal serine residue via an autocatalytic post-translational modification. Two non-identical subunits are generated from the proenzyme in this reaction, and the pyruvate is formed at the N-terminus of the alpha chain, which is derived from the carboxyl end of the proenzyme. The autoendoproteolytic cleavage occurs by a canonical serine protease mechanism, in which the side chain hydroxyl group of the serine supplies its oxygen atom to form the C-terminus of the beta chain, while the remainder of the serine residue undergoes an oxidative deamination to produce ammonia and the pyruvoyl prosthetic group on the alpha chain. During this reaction, the Ser that is part of the protease active site of the proenzyme becomes the pyruvoyl prosthetic group, which constitutes an essential element of the active site of the mature decarboxylase.

It is found in the cell membrane. The enzyme catalyses a 1,2-diacyl-sn-glycero-3-phospho-L-serine + H(+) = a 1,2-diacyl-sn-glycero-3-phosphoethanolamine + CO2. The protein operates within phospholipid metabolism; phosphatidylethanolamine biosynthesis; phosphatidylethanolamine from CDP-diacylglycerol: step 2/2. Its function is as follows. Catalyzes the formation of phosphatidylethanolamine (PtdEtn) from phosphatidylserine (PtdSer). The polypeptide is Phosphatidylserine decarboxylase proenzyme (Dickeya dadantii (strain 3937) (Erwinia chrysanthemi (strain 3937))).